The primary structure comprises 1407 residues: Metabotropic glutamate receptor-like protein P (1407 aa).

Residues 1–696 are Extracellular-facing; sequence MKFKKKNIYW…KTIKVTSFVK (696 aa). N-linked (GlcNAc...) asparagine glycans are attached at residues N43 and N58. PbH1 repeat units follow at residues 93–118 and 129–150; these read ISDI…FDGG and FVNV…FLYN. 16 N-linked (GlcNAc...) asparagine glycosylation sites follow: N162, N179, N182, N230, N241, N270, N368, N391, N464, N512, N539, N544, N554, N571, N627, and N646. A PbH1 3 repeat occupies 254-279; the sequence is ISNVIFESCEFIGNRANSTGGLSFLT. A PbH1 4 repeat occupies 452–476; sequence GYSVYIENCEVKNNTGLFKGCFIDT. The helical transmembrane segment at 697-717 threads the bilayer; the sequence is FLVGTLAAILLIILIISGFIS. The Cytoplasmic segment spans residues 718–731; the sequence is LKYRKKRVIRYSNP. Residues 732-752 traverse the membrane as a helical segment; sequence LFLCIILVGCIIFLITIPVLF. The Extracellular segment spans residues 753 to 758; the sequence is GSTSAT. A helical transmembrane segment spans residues 759 to 779; sequence CKIRFPIIVIGSCLVTSSVFI. Topologically, residues 780–806 are cytoplasmic; that stretch reads KQFRIWRLIKDIQLLRETNVENKYLLK. The chain crosses the membrane as a helical span at residues 807-827; it reads FISILMVIPIIIVICSFFIFP. Residues 828–853 are Extracellular-facing; that stretch reads THEKYTFNQRDITITHYCSDGSYLAY. A helical transmembrane segment spans residues 854-874; that stretch reads VIIFLVYQMAILLFGCYLVIV. At 875–890 the chain is on the cytoplasmic side; the sequence is CRKFRSIPGTFNEATY. The helical transmembrane segment at 891 to 911 threads the bilayer; it reads IGILIYNYTVVLIVAIPLAYV. Over 912–919 the chain is Extracellular; sequence FNKNPLAN. Residues 920–940 traverse the membrane as a helical segment; it reads FLIFSISIIVFVLSTIILLFI. At 941-1407 the chain is on the cytoplasmic side; it reads PKFHFLLRKK…LSPINLSKRK (467 aa). Over residues 991–1004 the composition is skewed to polar residues; it reads QQRQGNLYNNNSLG. 4 disordered regions span residues 991–1072, 1084–1248, 1267–1351, and 1369–1407; these read QQRQ…DPNF, GKRK…SSIG, KKVK…NFNE, and FHQK…SKRK. Residues 1005-1029 are compositionally biased toward low complexity; that stretch reads RSISSNTRKRSNNNINNNNNNNSFN. Polar residues predominate over residues 1030–1040; it reads MTGFSDSSSTI. Residues 1041–1071 are compositionally biased toward low complexity; the sequence is SNPNLTSFTSSPSSLNSSSDSDSTPDFNDPN. A compositionally biased stretch (basic and acidic residues) spans 1084-1093; the sequence is GKRKSIEKNK. Composition is skewed to low complexity over residues 1099 to 1147, 1154 to 1246, and 1276 to 1339; these read PNSP…NTPI, SSKT…SDSS, and SDST…NNNN. Residues 1315 to 1344 adopt a coiled-coil conformation; that stretch reads NNNNNNNNNNNNNINNNNNNANNNNSDTDD.

The protein belongs to the G-protein coupled receptor 3 family. GABA-B receptor subfamily.

The protein resides in the membrane. In Dictyostelium discoideum (Social amoeba), this protein is Metabotropic glutamate receptor-like protein P (grlP).